The sequence spans 674 residues: tRNA 5-methylaminomethyl-2-thiouridine biosynthesis bifunctional protein MnmC (674 aa).

A tRNA (mnm(5)s(2)U34)-methyltransferase region spans residues M1–A248. The interval I276–R674 is FAD-dependent cmnm(5)s(2)U34 oxidoreductase.

It in the N-terminal section; belongs to the methyltransferase superfamily. tRNA (mnm(5)s(2)U34)-methyltransferase family. In the C-terminal section; belongs to the DAO family. The cofactor is FAD.

Its subcellular location is the cytoplasm. The enzyme catalyses 5-aminomethyl-2-thiouridine(34) in tRNA + S-adenosyl-L-methionine = 5-methylaminomethyl-2-thiouridine(34) in tRNA + S-adenosyl-L-homocysteine + H(+). Functionally, catalyzes the last two steps in the biosynthesis of 5-methylaminomethyl-2-thiouridine (mnm(5)s(2)U) at the wobble position (U34) in tRNA. Catalyzes the FAD-dependent demodification of cmnm(5)s(2)U34 to nm(5)s(2)U34, followed by the transfer of a methyl group from S-adenosyl-L-methionine to nm(5)s(2)U34, to form mnm(5)s(2)U34. This Hydrogenovibrio crunogenus (strain DSM 25203 / XCL-2) (Thiomicrospira crunogena) protein is tRNA 5-methylaminomethyl-2-thiouridine biosynthesis bifunctional protein MnmC.